Here is a 477-residue protein sequence, read N- to C-terminus: ATP synthase subunit beta (477 aa).

Position 163–170 (163–170 (GGAGVGKT)) interacts with ATP.

This sequence belongs to the ATPase alpha/beta chains family. As to quaternary structure, F-type ATPases have 2 components, CF(1) - the catalytic core - and CF(0) - the membrane proton channel. CF(1) has five subunits: alpha(3), beta(3), gamma(1), delta(1), epsilon(1). CF(0) has four main subunits: a(1), b(1), b'(1) and c(9-12).

The protein resides in the cellular thylakoid membrane. The catalysed reaction is ATP + H2O + 4 H(+)(in) = ADP + phosphate + 5 H(+)(out). Its function is as follows. Produces ATP from ADP in the presence of a proton gradient across the membrane. The catalytic sites are hosted primarily by the beta subunits. In Synechococcus sp. (strain JA-3-3Ab) (Cyanobacteria bacterium Yellowstone A-Prime), this protein is ATP synthase subunit beta.